Consider the following 396-residue polypeptide: Ubiquitin-like modifier-activating enzyme 5 (396 aa).

5 residues coordinate ATP: glycine 76, aspartate 97, lysine 120, asparagine 143, and asparagine 177. 2 residues coordinate Zn(2+): cysteine 219 and cysteine 222. Residue cysteine 243 is the Glycyl thioester intermediate of the active site. Residues cysteine 296 and cysteine 301 each contribute to the Zn(2+) site.

This sequence belongs to the ubiquitin-activating E1 family. UBA5 subfamily.

In terms of biological role, E1-like enzyme which activates UFM1. In Drosophila ananassae (Fruit fly), this protein is Ubiquitin-like modifier-activating enzyme 5.